The primary structure comprises 1652 residues: Maestro heat-like repeat-containing protein family member 1 (1652 aa).

HEAT repeat units lie at residues 3–41 (ETYA…SKPA), 260–300 (EEQL…VGSR), 344–382 (CCSP…AAAA), 385–423 (EVKK…HGYL), 1369–1407 (LMLL…GSPD), 1410–1448 (QTHS…LMDL), and 1616–1652 (QVDL…VKFA).

The protein belongs to the MROH1 family. As to quaternary structure, homooligomer; homooligomerizes at lysosome scission sites.

The protein localises to the lysosome membrane. Lysosome fission factor. Recruited to lysosomes by RAB7 (RAB7A or RAB7B) at scission sites and homooligomerizes to mediate the constriction and scission of lysosomal tubules. May sever membranes by inserting amphipathic helices into one bilayer leaflet. Lysosome fission is required to maintain their steady-state number, shape, size, composition and function, and to accomplish regeneration. The protein is Maestro heat-like repeat-containing protein family member 1 (MROH1) of Bos taurus (Bovine).